The sequence spans 223 residues: Urease accessory protein UreF (223 aa).

This sequence belongs to the UreF family. In terms of assembly, ureD, UreF and UreG form a complex that acts as a GTP-hydrolysis-dependent molecular chaperone, activating the urease apoprotein by helping to assemble the nickel containing metallocenter of UreC. The UreE protein probably delivers the nickel.

It localises to the cytoplasm. Required for maturation of urease via the functional incorporation of the urease nickel metallocenter. The sequence is that of Urease accessory protein UreF from Rhizobium leguminosarum bv. viciae.